The following is a 141-amino-acid chain: Protein wingless (141 aa).

The O-palmitoleoyl serine; by PORCN moiety is linked to residue Ser3. Polar residues predominate over residues 40-49 (TDLEAPTQRN). The interval 40–61 (TDLEAPTQRNDAAPHRAPRRER) is disordered. Cys107 and Cys122 are joined by a disulfide. N-linked (GlcNAc...) asparagine glycans are attached at residues Asn108 and Asn138.

Belongs to the Wnt family. In terms of processing, palmitoleoylated by porcupine. The lipid group functions as a sorting signal, targeting the ligand to polarized vesicles that transport wg to unique sites at the cell surface. Depalmitoleoylated by notum, leading to inhibit Wnt signaling pathway.

It localises to the secreted. It is found in the extracellular space. The protein localises to the extracellular matrix. Functionally, segment polarity protein. Binds to the frizzled seven-transmembrane receptors. This protein is probably a growth factor. This chain is Protein wingless (WG), found in Manduca sexta (Tobacco hawkmoth).